Here is a 209-residue protein sequence, read N- to C-terminus: FMN-dependent NADH:quinone oxidoreductase 2 (209 aa).

Position 17–19 (17–19 (SAS)) interacts with FMN.

It belongs to the azoreductase type 1 family. Homodimer. FMN serves as cofactor.

It carries out the reaction 2 a quinone + NADH + H(+) = 2 a 1,4-benzosemiquinone + NAD(+). It catalyses the reaction N,N-dimethyl-1,4-phenylenediamine + anthranilate + 2 NAD(+) = 2-(4-dimethylaminophenyl)diazenylbenzoate + 2 NADH + 2 H(+). Functionally, quinone reductase that provides resistance to thiol-specific stress caused by electrophilic quinones. Also exhibits azoreductase activity. Catalyzes the reductive cleavage of the azo bond in aromatic azo compounds to the corresponding amines. The protein is FMN-dependent NADH:quinone oxidoreductase 2 of Lactiplantibacillus plantarum (strain ATCC BAA-793 / NCIMB 8826 / WCFS1) (Lactobacillus plantarum).